The sequence spans 721 residues: Xylosyl- and glucuronyltransferase LARGE2 (721 aa).

At 1–8 (MLPRGRPR) the chain is on the cytoplasmic side. A helical; Signal-anchor for type II membrane protein transmembrane segment spans residues 9-29 (ALGAAALLLLLLLLGFLLFGG). Residues 30–721 (DLGCERREPG…LQQPQSPARG (692 aa)) are Lumenal-facing. The interval 59-89 (DGRLRRAAALDGDPGAGPGDHNRSDCGPQPP) is disordered. N-linked (GlcNAc...) asparagine glycosylation is found at Asn-80 and Asn-107. A xylosyltransferase activity region spans residues 97–372 (LHVAIVCAGH…FLEYDGNLLR (276 aa)). The Mn(2+) site is built by Asp-201 and Asp-203. Residue Asn-231 is glycosylated (N-linked (GlcNAc...) asparagine). The interval 373 to 715 (RELFVCPSQP…LKYLPALQQP (343 aa)) is glucuronyltransferase activity. Mn(2+) contacts are provided by Asp-521 and Asp-523.

The protein in the C-terminal section; belongs to the glycosyltransferase 49 family. It in the N-terminal section; belongs to the glycosyltransferase 8 family. In terms of assembly, interacts with B4GAT1. Mn(2+) is required as a cofactor. Widely expressed. Expressed at high level in placenta, pancreas and kidney compared to LARGE. Not expressed in brain.

The protein localises to the golgi apparatus membrane. It carries out the reaction 3-O-[beta-D-GlcA-(1-&gt;3)-beta-D-Xyl-(1-&gt;4)-Rib-ol-P-Rib-ol-P-3-beta-D-GalNAc-(1-&gt;3)-beta-D-GlcNAc-(1-&gt;4)-(O-6-P-alpha-D-Man)]-Thr-[protein] + UDP-alpha-D-xylose = 3-O-[alpha-D-Xyl-(1-&gt;3)-beta-D-GlcA-(1-&gt;4)-beta-D-Xyl-(1-&gt;4)-Rib-ol-P-Rib-ol-P-3-beta-D-GalNAc-(1-&gt;3)-beta-D-GlcNAc-(1-&gt;4)-(O-6-P-alpha-D-Man)]-Thr-[protein] + UDP + H(+). The catalysed reaction is 3-O-{(1-&gt;[3)-alpha-D-Xyl-(1-&gt;3)-beta-D-GlcA-(1-&gt;](n)-4)-beta-D-Xyl-(1-&gt;4)-Rib-ol-P-Rib-ol-P-3-beta-D-GalNAc-(1-&gt;3)-beta-D-GlcNAc-(1-&gt;4)-O-6-P-alpha-D-Man}-L-Thr-[protein] + UDP-alpha-D-glucuronate = 3-O-{beta-D-GlcA-(1-&gt;[3)-alpha-D-Xyl-(1-&gt;3)-beta-D-GlcA-(1-&gt;](n)-4)-beta-D-Xyl-(1-&gt;4)-Rib-ol-P-Rib-ol-P-3-beta-D-GalNAc-(1-&gt;3)-beta-D-GlcNAc-(1-&gt;4)-O-6-P-alpha-D-Man}-L-Thr-[protein] + UDP + H(+). It catalyses the reaction 3-O-{beta-D-GlcA-(1-&gt;[3)-alpha-D-Xyl-(1-&gt;3)-beta-D-GlcA-(1-&gt;](n)-4)-beta-D-Xyl-(1-&gt;4)-Rib-ol-P-Rib-ol-P-3-beta-D-GalNAc-(1-&gt;3)-beta-D-GlcNAc-(1-&gt;4)-O-6-P-alpha-D-Man}-L-Thr-[protein] + UDP-alpha-D-xylose = 3-O-{(1-&gt;[3)-alpha-D-Xyl-(1-&gt;3)-beta-D-GlcA-(1-&gt;](n+1)-4)-beta-D-Xyl-(1-&gt;4)-Rib-ol-P-Rib-ol-P-3-beta-D-GalNAc-(1-&gt;3)-beta-D-GlcNAc-(1-&gt;4)-O-6-P-alpha-D-Man}-L-Thr-[protein] + UDP + H(+). It functions in the pathway protein modification; protein glycosylation. Functionally, bifunctional glycosyltransferase with both alpha-1,3-xylosyltransferase and beta-1,3-glucuronyltransferase activities involved in the maturation of alpha-dystroglycan (DAG1) by glycosylation leading to DAG1 binding to laminin G-like domain-containing extracellular proteins with high affinity and in a phosphorylated-O-mannosyl trisaccharide dependent manner. Elongates the glucuronyl-beta-1,4-xylose-beta disaccharide primer structure by adding repeating units [-3-Xylose-alpha-1,3-GlcA-beta-1-] to produce a heteropolysaccharide. Supports the maturation of DAG1 more effectively than LARGE1. In addition, can modify both heparan sulfate (HS)- and chondroitin/dermatan sulfate (CS/DS)-proteoglycans (PGs), namely GPC4, with a glycosaminoglycan (GAG)-like polysaccharide composed of xylose and glucuronic acid to confer laminin binding. This Homo sapiens (Human) protein is Xylosyl- and glucuronyltransferase LARGE2.